Here is a 72-residue protein sequence, read N- to C-terminus: Translation initiation factor IF-1 (72 aa).

The S1-like domain maps to 1 to 72 (MSKSDIIEMQ…TRGRITWRAK (72 aa)).

This sequence belongs to the IF-1 family. In terms of assembly, component of the 30S ribosomal translation pre-initiation complex which assembles on the 30S ribosome in the order IF-2 and IF-3, IF-1 and N-formylmethionyl-tRNA(fMet); mRNA recruitment can occur at any time during PIC assembly.

Its subcellular location is the cytoplasm. In terms of biological role, one of the essential components for the initiation of protein synthesis. Stabilizes the binding of IF-2 and IF-3 on the 30S subunit to which N-formylmethionyl-tRNA(fMet) subsequently binds. Helps modulate mRNA selection, yielding the 30S pre-initiation complex (PIC). Upon addition of the 50S ribosomal subunit IF-1, IF-2 and IF-3 are released leaving the mature 70S translation initiation complex. This chain is Translation initiation factor IF-1, found in Clostridium perfringens (strain 13 / Type A).